Consider the following 320-residue polypeptide: Thioredoxin reductase (320 aa).

Position 36–43 (36–43 (TGMEQGGQ)) interacts with FAD. A disulfide bridge links Cys136 with Cys139. 287–296 (DVTDHVYRQA) provides a ligand contact to FAD.

It belongs to the class-II pyridine nucleotide-disulfide oxidoreductase family. Homodimer. FAD is required as a cofactor.

It is found in the cytoplasm. The enzyme catalyses [thioredoxin]-dithiol + NADP(+) = [thioredoxin]-disulfide + NADPH + H(+). This Coxiella burnetii (strain RSA 493 / Nine Mile phase I) protein is Thioredoxin reductase (trxB).